A 423-amino-acid polypeptide reads, in one-letter code: Lipoamide acyltransferase component of branched-chain alpha-keto acid dehydrogenase complex (423 aa).

A Lipoyl-binding domain is found at 3–78 (THVIKMPDIG…AVGSELIRIE (76 aa)). K44 is subject to N6-lipoyllysine. The Peripheral subunit-binding (PSBD) domain maps to 137–174 (LASPAVRKRALDAGIELRYVHGSGPAGRILHEDLDAFM). Residues H395 and D399 contribute to the active site.

The protein belongs to the 2-oxoacid dehydrogenase family. As to quaternary structure, forms a 24-polypeptide structural core with octahedral symmetry. The cofactor is (R)-lipoate.

It catalyses the reaction N(6)-[(R)-dihydrolipoyl]-L-lysyl-[protein] + 2-methylpropanoyl-CoA = N(6)-[(R)-S(8)-2-methylpropanoyldihydrolipoyl]-L-lysyl-[protein] + CoA. Functionally, the branched-chain alpha-keto dehydrogenase complex catalyzes the overall conversion of alpha-keto acids to acyl-CoA and CO(2). It contains multiple copies of three enzymatic components: branched-chain alpha-keto acid decarboxylase (E1), lipoamide acyltransferase (E2) and lipoamide dehydrogenase (E3). The sequence is that of Lipoamide acyltransferase component of branched-chain alpha-keto acid dehydrogenase complex (bkdB) from Pseudomonas putida (Arthrobacter siderocapsulatus).